We begin with the raw amino-acid sequence, 210 residues long: Ras-related protein SEC4 (210 aa).

Position 21–28 (G21–S28) interacts with GTP. An Effector region motif is present at residues F43–F51. GTP is bound by residues D69–Q73 and N127–D130. 2 S-geranylgeranyl cysteine lipidation sites follow: C209 and C210.

The protein belongs to the small GTPase superfamily. Rab family.

The protein resides in the cytoplasmic vesicle. Its subcellular location is the secretory vesicle membrane. The protein localises to the cell membrane. Functionally, involved in exocytosis. Maybe by regulating the binding and fusion of secretory vesicles with the cell surface. The GTP-bound form of SEC4 may interact with an effector, thereby stimulating its activity and leading to exocytotic fusion. SEC4 may be an upstream activator of the 19.5S SEC8/SEC15 particle. SEC4 probably interacts directly with SEC8; it could serve as the attachment site for the SEC8/SEC15 particle. The polypeptide is Ras-related protein SEC4 (SEC4) (Candida albicans (strain SC5314 / ATCC MYA-2876) (Yeast)).